The chain runs to 438 residues: MTGIGNREPEHGAGAHVGAAVSVPDAASIPHSPLPIPGARMRAPRIALIAGEASGDILGAGLIDALRRRYPDAEFVGIGGDAMRSAGCQTWFDASELAVMGLTEVLRHLPRLLKLRSAFRERVLAWKPDVFIGIDAPDFNLPVERWLKQRGVRTVHYVSPSVWAWREKRAEKIGVSADLVLCLFPMEPPIYAKHGVDARFVGHPMADAIAYQADREAARAKLGLSTSSTVLAVLPGSRHGEISRLGDTFFQAAWLVSEHLPNLHVLVPAANPGCKQLLAEQLSRSSLPVMRSHLLDGQARTAMLAADVVLLASGTATLEAMLVKRPMVVGYKVAPLTYRIVKTLGLLKVNRYALPNILANEDLAPELMQDDCTPERLCEALLDWFKHPEKVAGLQSRYLALHAQLRQDASARAAEAVAELLTQRELGIGNRESGGAGS.

This sequence belongs to the LpxB family.

It catalyses the reaction a lipid X + a UDP-2-N,3-O-bis[(3R)-3-hydroxyacyl]-alpha-D-glucosamine = a lipid A disaccharide + UDP + H(+). It functions in the pathway bacterial outer membrane biogenesis; LPS lipid A biosynthesis. Its function is as follows. Condensation of UDP-2,3-diacylglucosamine and 2,3-diacylglucosamine-1-phosphate to form lipid A disaccharide, a precursor of lipid A, a phosphorylated glycolipid that anchors the lipopolysaccharide to the outer membrane of the cell. This Xanthomonas campestris pv. campestris (strain 8004) protein is Lipid-A-disaccharide synthase.